The sequence spans 288 residues: Cell division protein ZipA (288 aa).

Residue M1 is a topological domain, periplasmic. Residues 2-22 (EIGLREWLIVIGIIVIAGILF) form a helical membrane-spanning segment. The Cytoplasmic portion of the chain corresponds to 23–288 (DGWRRMRGGK…FERRALTQKR (266 aa)). Composition is skewed to basic and acidic residues over residues 66-75 (KEPQLDEHDL) and 83-93 (REAREPRESGS). Residues 66 to 141 (KEPQLDEHDL…AKSSPAVADK (76 aa)) are disordered. Low complexity predominate over residues 106-117 (GDLNLDLDLDGG).

This sequence belongs to the ZipA family. Interacts with FtsZ via their C-terminal domains.

Its subcellular location is the cell inner membrane. In terms of biological role, essential cell division protein that stabilizes the FtsZ protofilaments by cross-linking them and that serves as a cytoplasmic membrane anchor for the Z ring. Also required for the recruitment to the septal ring of downstream cell division proteins. The sequence is that of Cell division protein ZipA from Pseudomonas fluorescens (strain Pf0-1).